Reading from the N-terminus, the 137-residue chain is Small ribosomal subunit protein uS12 (137 aa).

Residues 1–28 (MPTINQLVRKPRKSKAKKSDSPALNKGF) are disordered. Position 102 is a 3-methylthioaspartic acid (aspartate 102).

Belongs to the universal ribosomal protein uS12 family. Part of the 30S ribosomal subunit. Contacts proteins S8 and S17. May interact with IF1 in the 30S initiation complex.

In terms of biological role, with S4 and S5 plays an important role in translational accuracy. Interacts with and stabilizes bases of the 16S rRNA that are involved in tRNA selection in the A site and with the mRNA backbone. Located at the interface of the 30S and 50S subunits, it traverses the body of the 30S subunit contacting proteins on the other side and probably holding the rRNA structure together. The combined cluster of proteins S8, S12 and S17 appears to hold together the shoulder and platform of the 30S subunit. In Staphylococcus carnosus (strain TM300), this protein is Small ribosomal subunit protein uS12.